Consider the following 415-residue polypeptide: Coenzyme F420 hydrogenase subunit alpha (415 aa).

Positions 68, 71, 391, and 394 each coordinate Ni(2+).

The protein belongs to the [NiFe]/[NiFeSe] hydrogenase large subunit family. In terms of assembly, heterocomplex of the form (alpha(1)beta(1)gamma(1))(8). It depends on Ni(2+) as a cofactor. The cofactor is iron-sulfur cluster. Requires FAD as cofactor.

It catalyses the reaction oxidized coenzyme F420-(gamma-L-Glu)(n) + H2 + H(+) = reduced coenzyme F420-(gamma-L-Glu)(n). Reduces the physiological low-potential two-electron acceptor coenzyme F420, and the artificial one-electron acceptor methylviologen. In Methanocaldococcus jannaschii (strain ATCC 43067 / DSM 2661 / JAL-1 / JCM 10045 / NBRC 100440) (Methanococcus jannaschii), this protein is Coenzyme F420 hydrogenase subunit alpha (frhA).